The sequence spans 81 residues: Small ribosomal subunit protein uS15 (81 aa).

Belongs to the universal ribosomal protein uS15 family. As to quaternary structure, part of the 30S ribosomal subunit. Forms a bridge to the 50S subunit in the 70S ribosome, contacting the 23S rRNA.

Its function is as follows. One of the primary rRNA binding proteins, it binds directly to 16S rRNA where it helps nucleate assembly of the platform of the 30S subunit by binding and bridging several RNA helices of the 16S rRNA. In terms of biological role, forms an intersubunit bridge (bridge B4) with the 23S rRNA of the 50S subunit in the ribosome. The polypeptide is Small ribosomal subunit protein uS15 (Mesomycoplasma hyorhinis (Mycoplasma hyorhinis)).